We begin with the raw amino-acid sequence, 120 residues long: uncharacterized protein (120 aa).

It to the N-terminal region of phage HK97/HK620 Gp37/hpaH.

This is an uncharacterized protein from Escherichia coli (strain K12).